Here is a 314-residue protein sequence, read N- to C-terminus: Olfactory receptor 9A4 (314 aa).

Over 1–24 (MLMNYSSATEFYLLGFPGSEELHH) the chain is Extracellular. Asparagine 4 carries N-linked (GlcNAc...) asparagine glycosylation. A helical membrane pass occupies residues 25-45 (ILFAIFFFFYLVTLMGNTVII). At 46-53 (MIVCVDKR) the chain is on the cytoplasmic side. The chain crosses the membrane as a helical span at residues 54 to 74 (LQSPMYFFLGHLSALEILVTT). At 75-99 (IIVPVMLWGLLLPGMQTIYLSACVV) the chain is on the extracellular side. Cysteine 97 and cysteine 189 are oxidised to a cystine. The chain crosses the membrane as a helical span at residues 100–120 (QLFLYLAVGTTEFALLGAMAV). At 121–139 (DRYVAVCNPLRYNIIMNRH) the chain is on the cytoplasmic side. Residues 140-160 (TCNFVVLVSWVFGFLFQIWPV) traverse the membrane as a helical segment. The Extracellular portion of the chain corresponds to 161–197 (YVMFQLTYCKSNVVNNFFCDRGQLLKLSCNNTLFTEF). Asparagine 190 carries N-linked (GlcNAc...) asparagine glycosylation. Residues 198 to 217 (ILFLMAVFVLFGSLIPTIVS) traverse the membrane as a helical segment. The Cytoplasmic portion of the chain corresponds to 218 to 237 (NAYIISTILKIPSSSGRRKS). A helical membrane pass occupies residues 238-258 (FSTCASHFTCVVIGYGSCLFL). Over 259-271 (YVKPKQTQAADYN) the chain is Extracellular. Residues 272 to 292 (WVVSLMVSVVTPFLNPFIFTL) traverse the membrane as a helical segment. Residues 293 to 314 (RNDKVIEALRDGVKRCCQLFRN) lie on the Cytoplasmic side of the membrane.

Belongs to the G-protein coupled receptor 1 family.

The protein resides in the cell membrane. In terms of biological role, odorant receptor. The sequence is that of Olfactory receptor 9A4 (OR9A4) from Homo sapiens (Human).